Reading from the N-terminus, the 55-residue chain is ATP synthase F(0) complex subunit 8 (55 aa).

The chain crosses the membrane as a helical span at residues 4-24 (LNPAPWFTILVFSWMIFLAII). A compositionally biased stretch (polar residues) spans 32 to 41 (TSPNDSSPLS). The segment at 32–55 (TSPNDSSPLSTEKHKTESWDWPWQ) is disordered.

It belongs to the ATPase protein 8 family. In terms of assembly, component of the ATP synthase complex composed at least of ATP5F1A/subunit alpha, ATP5F1B/subunit beta, ATP5MC1/subunit c (homooctomer), MT-ATP6/subunit a, MT-ATP8/subunit 8, ATP5ME/subunit e, ATP5MF/subunit f, ATP5MG/subunit g, ATP5MK/subunit k, ATP5MJ/subunit j, ATP5F1C/subunit gamma, ATP5F1D/subunit delta, ATP5F1E/subunit epsilon, ATP5PF/subunit F6, ATP5PB/subunit b, ATP5PD/subunit d, ATP5PO/subunit OSCP. ATP synthase complex consists of a soluble F(1) head domain (subunits alpha(3) and beta(3)) - the catalytic core - and a membrane F(0) domain - the membrane proton channel (subunits c, a, 8, e, f, g, k and j). These two domains are linked by a central stalk (subunits gamma, delta, and epsilon) rotating inside the F1 region and a stationary peripheral stalk (subunits F6, b, d, and OSCP).

The protein resides in the mitochondrion membrane. Subunit 8, of the mitochondrial membrane ATP synthase complex (F(1)F(0) ATP synthase or Complex V) that produces ATP from ADP in the presence of a proton gradient across the membrane which is generated by electron transport complexes of the respiratory chain. ATP synthase complex consist of a soluble F(1) head domain - the catalytic core - and a membrane F(1) domain - the membrane proton channel. These two domains are linked by a central stalk rotating inside the F(1) region and a stationary peripheral stalk. During catalysis, ATP synthesis in the catalytic domain of F(1) is coupled via a rotary mechanism of the central stalk subunits to proton translocation. In vivo, can only synthesize ATP although its ATP hydrolase activity can be activated artificially in vitro. Part of the complex F(0) domain. This is ATP synthase F(0) complex subunit 8 from Formosania lacustris (Oriental stream loach).